A 130-amino-acid chain; its full sequence is DNA-directed RNA polymerase subunit omega (130 aa).

Positions Glu-110–Glu-130 are disordered.

It belongs to the RNA polymerase subunit omega family. The RNAP catalytic core consists of 2 alpha, 1 beta, 1 beta' and 1 omega subunit. When a sigma factor is associated with the core the holoenzyme is formed, which can initiate transcription.

The enzyme catalyses RNA(n) + a ribonucleoside 5'-triphosphate = RNA(n+1) + diphosphate. Its function is as follows. Promotes RNA polymerase assembly. Latches the N- and C-terminal regions of the beta' subunit thereby facilitating its interaction with the beta and alpha subunits. This chain is DNA-directed RNA polymerase subunit omega, found in Rhodopseudomonas palustris (strain HaA2).